Reading from the N-terminus, the 329-residue chain is Biotin synthase (329 aa).

A Radical SAM core domain is found at 38-262 (NTIQVSTLLS…IMPHSYIRLS (225 aa)). [4Fe-4S] cluster-binding residues include Cys53, Cys57, and Cys60. [2Fe-2S] cluster contacts are provided by Cys97, Cys128, Cys188, and Arg260.

Belongs to the radical SAM superfamily. Biotin synthase family. In terms of assembly, homodimer. It depends on [4Fe-4S] cluster as a cofactor. [2Fe-2S] cluster serves as cofactor.

It catalyses the reaction (4R,5S)-dethiobiotin + (sulfur carrier)-SH + 2 reduced [2Fe-2S]-[ferredoxin] + 2 S-adenosyl-L-methionine = (sulfur carrier)-H + biotin + 2 5'-deoxyadenosine + 2 L-methionine + 2 oxidized [2Fe-2S]-[ferredoxin]. The protein operates within cofactor biosynthesis; biotin biosynthesis; biotin from 7,8-diaminononanoate: step 2/2. Its function is as follows. Catalyzes the conversion of dethiobiotin (DTB) to biotin by the insertion of a sulfur atom into dethiobiotin via a radical-based mechanism. This is Biotin synthase from Acinetobacter baumannii (strain ACICU).